Here is a 156-residue protein sequence, read N- to C-terminus: Small ribosomal subunit protein uS7 (156 aa).

It belongs to the universal ribosomal protein uS7 family. In terms of assembly, part of the 30S ribosomal subunit. Contacts proteins S9 and S11.

One of the primary rRNA binding proteins, it binds directly to 16S rRNA where it nucleates assembly of the head domain of the 30S subunit. Is located at the subunit interface close to the decoding center, probably blocks exit of the E-site tRNA. In Nostoc punctiforme (strain ATCC 29133 / PCC 73102), this protein is Small ribosomal subunit protein uS7.